Here is a 139-residue protein sequence, read N- to C-terminus: MKKGTVLNSDISSVISRLGHTDTLVVCDAGLPIPKSTTRIDMALTQGVPSFMQVLGVVTNEMQVEAVIIAEEIKQHNPQLHETLLTHLEQLQKHQGNTIEIRYTTHEQFKQQTAGSQAVIRSGECSPYANIILCAGVTF.

Catalysis depends on histidine 20, which acts as the Proton donor. Substrate is bound by residues aspartate 28, histidine 106, and 128 to 130 (YAN).

Belongs to the RbsD / FucU family. RbsD subfamily. In terms of assembly, homodecamer.

The protein localises to the cytoplasm. It carries out the reaction beta-D-ribopyranose = beta-D-ribofuranose. The protein operates within carbohydrate metabolism; D-ribose degradation; D-ribose 5-phosphate from beta-D-ribopyranose: step 1/2. Catalyzes the interconversion of beta-pyran and beta-furan forms of D-ribose. This chain is D-ribose pyranase, found in Escherichia coli O45:K1 (strain S88 / ExPEC).